Here is a 689-residue protein sequence, read N- to C-terminus: Acetyl-coenzyme A synthetase 2-like, mitochondrial (689 aa).

A mitochondrion-targeting transit peptide spans 1 to 37; it reads MAARTLGRGVGRLLGSLRGLSGQPARPPCGVSAPRRA. The segment at 17 to 46 is disordered; that stretch reads LRGLSGQPARPPCGVSAPRRAASGPSGSAP. Residues 32-46 are compositionally biased toward low complexity; that stretch reads SAPRRAASGPSGSAP. CoA contacts are provided by residues 224–227 and Thr-341; that span reads RGGR. Lys-396 carries the N6-acetyllysine modification. Residues 417–419, 441–446, Asp-533, and Arg-548 each bind ATP; these read GEP and DTWWQT. Ser-556 contributes to the CoA binding site. Position 559 (Arg-559) interacts with ATP. N6-acetyllysine is present on Lys-642.

It belongs to the ATP-dependent AMP-binding enzyme family. Interacts with SIRT3. Post-translationally, reversibly acetylated on Lys-642. The acetyl-CoA synthase activity is inhibited by acetylation and activated by deacetylation mediated by the deacetylase SIRT3.

Its subcellular location is the mitochondrion matrix. It catalyses the reaction acetate + ATP + CoA = acetyl-CoA + AMP + diphosphate. It carries out the reaction propanoate + ATP + CoA = propanoyl-CoA + AMP + diphosphate. With respect to regulation, inhibited by acetylation at Lys-642 and activated by deacetylation mediated by the deacetylase SIRT3. Catalyzes the synthesis of acetyl-CoA from short-chain fatty acids. Acetate is the preferred substrate. Can also utilize propionate with a much lower affinity. Provides acetyl-CoA that is utilized mainly for oxidation under ketogenic conditions. Involved in thermogenesis under ketogenic conditions, using acetate as a vital fuel when carbohydrate availability is insufficient. This chain is Acetyl-coenzyme A synthetase 2-like, mitochondrial (ACSS1), found in Homo sapiens (Human).